The sequence spans 779 residues: MVIMSEFSAVPSGTGQGQQKPLRVGFYDVERTLGKGNFAVVKLARHRVTKTQVAIKIIDKTRLDSSNLEKIYREVQLMKLLNHPNIIKLYQVMETKDMLYIVTEFAKNGEMFDYLTSNGHLSENEARQKFWQILSAVEYCHNHHIVHRDLKTENLLLDSNMDIKLADFGFGNFYKPGEPLSTWCGSPPYAAPEVFEGKEYEGPQLDVWSLGVVLYVLVCGSLPFDGPNLPTLRQRVLEGRFRIPFFMSQDCETLIRRMLVVDPAKRITIAQIRQHRWMQADPTLLQQDDPAFDMQGYTSNLGDYNEQVLGIMQALGIDRQRTIESLQNSSYNHFAAIYYLLLERLKEHRSAQPSSRPTPAPTRQPQLRSSDLSSLEVPQEILPCDPFRPSLLCPQPQALAQSVLQAEIDCDLHSSLQPLLFPLDTNCSGVFRHRSISPSSLLDTAISEEARQGPSLEEEQEVQEPLPGSTGRRHTLAEVSTHFSPLNPPCIIVSSSATASPSEGTSSDSCLPFSASEGPAGLGSGLATPGLLGTSSPVRLASPFLGSQSATPVLQTQAGLGTAVLPPVSFQEGRRASDTSLTQGLKAFRQQLRKNARTKGFLGLNKIKGLARQVCQSSVRTPRGGMSTFHTPAPSSGLQGCTTSNREGRSLLEEVLHQQRLLQLQHHSSTAAASSGCQQGPQLSPVPYVLAPCDSLLVSGIPLLPTPLLQAGMSPVASAAHLLDTHLHISAGPVALPTGPLPQCLTRLSPGCDPAGLPQGDCEMEDLTSGQRGTFVLVQ.

One can recognise a Protein kinase domain in the interval 27-278 (YDVERTLGKG…IAQIRQHRWM (252 aa)). Residues 33–41 (LGKGNFAVV) and K56 contribute to the ATP site. The Proton acceptor role is filled by D149. The residue at position 182 (T182) is a Phosphothreonine; by LKB1 and GSK3-beta. A Phosphoserine; by autocatalysis modification is found at S186. Residues 303 to 343 (DYNEQVLGIMQALGIDRQRTIESLQNSSYNHFAAIYYLLLE) enclose the UBA domain. T322 carries the phosphothreonine; by CaMK1 modification. Disordered regions lie at residues 350-375 (SAQP…LSSL) and 449-472 (EARQ…STGR). Polar residues predominate over residues 363–373 (RQPQLRSSDLS). S577 is modified (phosphoserine; by PKA). The segment at 586–612 (KAFRQQLRKNARTKGFLGLNKIKGLAR) is RK-rich region. Residues 621–641 (TPRGGMSTFHTPAPSSGLQGC) form a disordered region. Residues 628–641 (TFHTPAPSSGLQGC) are compositionally biased toward polar residues.

Belongs to the protein kinase superfamily. CAMK Ser/Thr protein kinase family. AMPK subfamily. Interacts (when phosphorylated on Thr-182 and Ser-186) with YWHAZ. Interacts with ATP1A1. It depends on Mg(2+) as a cofactor. Post-translationally, phosphorylated at Thr-182 by STK11/LKB1 in complex with STE20-related adapter-alpha (STRADA) pseudo kinase and CAB39, leading to its activation. Phosphorylation at Thr-182 promotes autophosphorylation at Ser-186, which is required for sustained activity. Autophosphorylation at Ser-186 is maintained by sequential phosphorylation at Thr-182 by GSK3-beta. GSK3-beta cannot initiate phosphorylation at Thr-182, it can only maintain it. Phosphorylation at Ser-577 by PKA promotes translocation to the cytoplasm. Phosphorylation at Thr-322 by CaMK1 following intracellular sodium concentration leads to activation. Expressed in lung, skin, ovary, heart and stomach. No expression in brain, liver or adult skeletal muscle but is present in skeletal muscle progenitor cells of the somite beginning at 9.5 dpc. Present at 8.0 dpc in the monolayer of presumptive myocardial cells but rapidly down-regulated at 8.5 dpc upon primitive ventricle formation, although still present in myocardial cells that will populate the primitive atrium and bulbus cordis. At 9.5 dpc expression is down-regulated in the primitive atrium but observed in the sinus venosus and truncus arteriosus.

The protein resides in the cytoplasm. It is found in the nucleus. It carries out the reaction L-seryl-[protein] + ATP = O-phospho-L-seryl-[protein] + ADP + H(+). The catalysed reaction is L-threonyl-[protein] + ATP = O-phospho-L-threonyl-[protein] + ADP + H(+). Its activity is regulated as follows. Activated by phosphorylation on Thr-182. Also activated by phosphorylation on Thr-322 in response to increases in intracellular sodium in parallel with elevations in intracellular calcium through the reversible sodium/calcium exchanger. Its function is as follows. Serine/threonine-protein kinase involved in various processes such as cell cycle regulation, gluconeogenesis and lipogenesis regulation, muscle growth and differentiation and tumor suppression. Phosphorylates HDAC4, HDAC5, PPME1, SREBF1, CRTC1/TORC1 and CRTC2/TORC2. Acts as a tumor suppressor and plays a key role in p53/TP53-dependent anoikis, a type of apoptosis triggered by cell detachment: required for phosphorylation of p53/TP53 in response to loss of adhesion and is able to suppress metastasis. Part of a sodium-sensing signaling network, probably by mediating phosphorylation of PPME1: following increases in intracellular sodium, SIK1 is activated by CaMK1 and phosphorylates PPME1 subunit of protein phosphatase 2A (PP2A), leading to dephosphorylation of sodium/potassium-transporting ATPase ATP1A1 and subsequent increase activity of ATP1A1. Acts as a regulator of muscle cells by phosphorylating and inhibiting class II histone deacetylases HDAC4 and HDAC5, leading to promote expression of MEF2 target genes in myocytes. Also required during cardiomyogenesis by regulating the exit of cardiomyoblasts from the cell cycle via down-regulation of CDKN1C/p57Kip2. Acts as a regulator of hepatic gluconeogenesis by phosphorylating and repressing the CREB-specific coactivators CRTC1/TORC1 and CRTC2/TORC2, leading to inhibit CREB activity. Also regulates hepatic lipogenesis by phosphorylating and inhibiting SREBF1. In concert with CRTC1/TORC1, regulates the light-induced entrainment of the circadian clock by attenuating PER1 induction; represses CREB-mediated transcription of PER1 by phosphorylating and deactivating CRTC1/TORC1. The protein is Serine/threonine-protein kinase SIK1 (Sik1) of Mus musculus (Mouse).